We begin with the raw amino-acid sequence, 522 residues long: Zinc finger protein C25B8.19c (522 aa).

5 disordered regions span residues 1–25, 61–96, 235–265, 311–386, and 413–462; these read MSSD…LPTT, DPQA…SNSN, QRQS…QEVT, QPSS…HTLS, and NSAQ…STSS. Residues 84-96 are compositionally biased toward low complexity; it reads AGNTNTPTTSNSN. 2 stretches are compositionally biased toward polar residues: residues 311–321 and 335–344; these read QPSSRDLQNHP and ASNTLNHANG. Over residues 345–362 the composition is skewed to low complexity; sequence NQAENASESSTSQSNDSQ. The segment covering 413-427 has biased composition (polar residues); that stretch reads NSAQAHPMGQQSDSN. Positions 428–438 are enriched in basic and acidic residues; sequence YSDHHNNDKRA. Residues 453–462 are compositionally biased toward low complexity; the sequence is SHTGSSSTSS. 2 consecutive C2H2-type zinc fingers follow at residues 468 to 495 and 496 to 522; these read YRCT…GERP and FVCD…IHGL.

The protein localises to the nucleus. This Schizosaccharomyces pombe (strain 972 / ATCC 24843) (Fission yeast) protein is Zinc finger protein C25B8.19c.